The sequence spans 2753 residues: Maltase-glucoamylase (2753 aa).

The Cytoplasmic portion of the chain corresponds to 1 to 13; it reads MARKKLKKFTTLE. A helical; Signal-anchor for type II membrane protein transmembrane segment spans residues 14-34; it reads IVLSVLLLVLFIISIVLIVLL. Residues 35 to 2753 lie on the Lumenal side of the membrane; it reads AKESLKSTAP…FTSLTWISTL (2719 aa). Residues 41–87 are disordered; sequence STAPDPGTTGTPDPGTTGTPDPGTTGTTHARTTGPPDPGTTGTTPVS. The segment covering 44–85 has biased composition (low complexity); that stretch reads PDPGTTGTPDPGTTGTPDPGTTGTTHARTTGPPDPGTTGTTP. Residues 88–134 enclose the P-type 1 domain; it reads AECPVVNELERINCIPDQPPTKATCDQRGCCWNPQGAVSVPWCYYSK. 3 disulfide bridges follow: Cys90–Cys118, Cys101–Cys117, and Cys112–Cys130. Residue Asn135 is glycosylated (N-linked (GlcNAc...) asparagine). Asp289 serves as a coordination point for acarbose. The N-linked (GlcNAc...) asparagine glycan is linked to Asn295. The segment at 356 to 737 is maltase; that stretch reads PEQVVQEYLE…FRAHSRGDTV (382 aa). Acarbose is bound at residue Asp413. Tyr416 and Tyr425 each carry sulfotyrosine. 3 N-linked (GlcNAc...) asparagine glycosylation sites follow: Asn457, Asn458, and Asn479. Asp529 (nucleophile) is an active-site residue. Glu532 is an active-site residue. Residues Arg612 and Asp628 each coordinate acarbose. Cys659 and Cys670 are disulfide-bonded. His686 is a binding site for acarbose. 8 N-linked (GlcNAc...) asparagine glycosylation sites follow: Asn707, Asn749, Asn827, Asn885, Asn912, Asn977, Asn989, and Asn1255. Residues 954–1000 form the P-type 2 domain; sequence WSIKIRDEEKIDCYPDENGASAENCTARGCIWEASNSSGVPFCYFVN. Disulfide bonds link Cys966/Cys983 and Cys978/Cys996. Residues 1221–1632 are glucoamylase; the sequence is TPELVTQQYT…MQKAHTEGVT (412 aa). Tyr1282 carries the sulfotyrosine modification. 3 N-linked (GlcNAc...) asparagine glycosylation sites follow: Asn1323, Asn1364, and Asn1388. The active-site Nucleophile is Asp1420. Glu1423 is a catalytic residue. The Proton donor role is filled by Asp1526. Residues 1850–1896 form the P-type 3 domain; it reads WSIKIRDEEKIDCYPDENGDSAENCTARGCIWEASNSSGVPFCYFVN. Cystine bridges form between Cys1862–Cys1879 and Cys1874–Cys1892. 4 N-linked (GlcNAc...) asparagine glycosylation sites follow: Asn2499, Asn2568, Asn2738, and Asn2743.

The protein belongs to the glycosyl hydrolase 31 family. As to quaternary structure, monomer. Post-translationally, N- and O-glycosylated. In terms of processing, does not undergo intracellular or extracellular proteolytic cleavage. Sulfated. In terms of tissue distribution, broadly expressed. Highly expressed in small intestine. Expressed in granulocytes.

Its subcellular location is the apical cell membrane. It catalyses the reaction Hydrolysis of terminal, non-reducing (1-&gt;4)-linked alpha-D-glucose residues with release of alpha-D-glucose.. The catalysed reaction is D-maltoheptaose + H2O = D-maltohexaose + alpha-D-glucose. The enzyme catalyses D-maltohexaose + H2O = D-maltopentaose + alpha-D-glucose. It carries out the reaction D-maltopentaose + H2O = D-maltotetraose + alpha-D-glucose. It catalyses the reaction D-maltotetraose + H2O = D-maltotriose + alpha-D-glucose. The catalysed reaction is D-maltotriose + H2O = D-maltose + alpha-D-glucose. The enzyme catalyses D-maltose + H2O = alpha-D-glucose + D-glucose. It carries out the reaction nigerose + H2O = alpha-D-glucose + D-glucose. It catalyses the reaction kojibiose + H2O = alpha-D-glucose + D-glucose. The catalysed reaction is isomaltose + H2O = alpha-D-glucose + D-glucose. The enzyme catalyses 6-O-alpha-D-glucopyranosyl-D-fructose + H2O = alpha-D-glucose + D-fructose. It participates in carbohydrate degradation. With respect to regulation, down-regulated at high oligomaltose concentration as it occurs during the mealtime. Down-regulated by anti-diabetic drug acarbose. In terms of biological role, alpha-(1,4) exo-glucosidase involved in breakdown of dietary starch oligosaccharides in small intestine. Cleaves the non-reducing alpha-(1,4)-linked glucose residue in linear dextrins with retention of anomeric center stereochemistry. Mainly hydrolyzes short length oligomaltoses having two to seven glucose residues. Can cleave alpha-(1,2), alpha-(1,3) and alpha-(1,6) glycosidic linkages with lower efficiency, whereas beta glycosidic linkages are usually not hydrolyzed. In Homo sapiens (Human), this protein is Maltase-glucoamylase.